The primary structure comprises 98 residues: NADH-ubiquinone oxidoreductase chain 4L (98 aa).

3 helical membrane-spanning segments follow: residues M1 to M21, S29 to L49, and I61 to V81.

Belongs to the complex I subunit 4L family. As to quaternary structure, core subunit of respiratory chain NADH dehydrogenase (Complex I) which is composed of 45 different subunits.

It is found in the mitochondrion inner membrane. The catalysed reaction is a ubiquinone + NADH + 5 H(+)(in) = a ubiquinol + NAD(+) + 4 H(+)(out). Its function is as follows. Core subunit of the mitochondrial membrane respiratory chain NADH dehydrogenase (Complex I) which catalyzes electron transfer from NADH through the respiratory chain, using ubiquinone as an electron acceptor. Part of the enzyme membrane arm which is embedded in the lipid bilayer and involved in proton translocation. In Phoca fasciata (Ribbon seal), this protein is NADH-ubiquinone oxidoreductase chain 4L (MT-ND4L).